Consider the following 356-residue polypeptide: Cyanuric acid amidohydrolase (356 aa).

The interval 1-99 (MPIAKVHRIA…FLVFERAEGN (99 aa)) is RU A. Residues Arg52 and 79–80 (SG) contribute to the substrate site. Residues 106–243 (ALAIGRAHTP…HEIVVLGMSE (138 aa)) are RU B. Lys156 is an active-site residue. Substrate-binding positions include Arg188 and 226–227 (SS). Catalysis depends on Ser226, which acts as the Nucleophile. The tract at residues 249–356 (LAIAHGVMAD…VAVIAARTMG (108 aa)) is RU C. Glu287 serves as a coordination point for Mg(2+). Residues Arg314 and 333–334 (SG) each bind substrate. Positions 336, 339, 340, 341, and 344 each coordinate Mg(2+).

This sequence belongs to the cyclic amide hydrolase (CyAH) family. In terms of assembly, homotetramer.

It carries out the reaction cyanurate + H2O = 1-carboxybiuret + H(+). It functions in the pathway xenobiotic degradation; atrazine degradation; biuret from cyanurate: step 1/1. With respect to regulation, inhibited by barbituric acid. Functionally, responsible for the hydrolysis of cyanuric acid, an intermediate formed during catabolism of s-triazine based compounds in herbicides such as atrazine and polymers such as melamine. Catalyzes the hydrolytic opening of the s-triazine ring of cyanuric acid (2,4,6-trihydroxy-s-triazine) to yield carbon dioxide and carboxybiuret, which spontaneously decarboxylates to biuret. The protein is Cyanuric acid amidohydrolase of Azorhizobium caulinodans (strain ATCC 43989 / DSM 5975 / JCM 20966 / LMG 6465 / NBRC 14845 / NCIMB 13405 / ORS 571).